A 456-amino-acid chain; its full sequence is MDVKTLKGFKDYLPKDSLIRIHIVKQIFSVLNSYNFDLIDTPVLEYSELLLKKSGDESEKQIYRFKDHGGRDVSMRFDLTIPFARFVATNISDLKFPFRRSQFGKVFRGENSQKGRYREFMQFDFDIVGEDGFRADAEILSVVYYGLEEIFLNFIEGINKKFIIHYSHLGILNSFFEKLGIKEESIFILRNIDKIDKIGIDKVKEALLLKIEKEAVDSILSLVNLQGAFKDKIQALKSILGDNESVKRVEDVYRHLSLLKIQDSFNLNLKISGGLDYYTGIVFESEVFGSNMGSVCSGGRYDNLVSSYSSSIQKVSGVGGSFGVDRIKDIIDLEQFSYIKIFVTKARSKVLIVNLDSALQNYYYELATRFRNHDYSKVKNISCEVYFKNKNGKNIKEQIEYALNKEIRFLVFVGQEEYKENKIKVRDLTKKEELLLSFEEVINVIKCNEKLLCTPF.

It belongs to the class-II aminoacyl-tRNA synthetase family. As to quaternary structure, homodimer.

The protein resides in the cytoplasm. The catalysed reaction is tRNA(His) + L-histidine + ATP = L-histidyl-tRNA(His) + AMP + diphosphate + H(+). This Borrelia garinii subsp. bavariensis (strain ATCC BAA-2496 / DSM 23469 / PBi) (Borreliella bavariensis) protein is Histidine--tRNA ligase.